The chain runs to 238 residues: 14-3-3 family protein artA (238 aa).

This sequence belongs to the 14-3-3 family.

Its function is as follows. 14-3-3 family protein that plays a role in the morphological differentiation and secondary metabolism biosynthesis. Required for normal fungal morphogenesis in an environment-dependent manner, affecting the balance between production of conidiophores and the formation of sclerotia, resistant structures that are necessary for the dissemination and survival. Acts as a positive regulator of conidiation and a negative regulator of sclerotial production. Also regulates the production of secondary metabolites such as aflatoxin, but also the indole-tetramic acid mycotoxin cyclopiazonic acid (CPA) and ustiloxin, an inhibitor of microtubule assembly. This chain is 14-3-3 family protein artA, found in Aspergillus flavus (strain ATCC 200026 / FGSC A1120 / IAM 13836 / NRRL 3357 / JCM 12722 / SRRC 167).